A 713-amino-acid polypeptide reads, in one-letter code: Subtilisin-like protease SBT4.9 (713 aa).

A signal peptide spans 1–24 (MARRADSFCLISCVLVSFVISVSA). Positions 25–113 (VTDDSQDKQV…VFPDINYKLQ (89 aa)) are cleaved as a propeptide — activation peptide. Residues 34 to 112 (VYVVYMGSLP…SVFPDINYKL (79 aa)) form the Inhibitor I9 domain. Positions 117–560 (SWDFLGLKEG…AGHVDPIAAI (444 aa)) constitute a Peptidase S8 domain. D145 (charge relay system) is an active-site residue. N176 is a glycosylation site (N-linked (GlcNAc...) asparagine). Catalysis depends on H200, which acts as the Charge relay system. N215 and N223 each carry an N-linked (GlcNAc...) asparagine glycan. A PA domain is found at 356-415 (NYPLYGGSTDGPLLRGKILVSEDKVSSEIVVANINENYHDYAYVSILPSSALSKDDFDSV). N-linked (GlcNAc...) asparagine glycosylation is present at N420. The active-site Charge relay system is S499. N536, N583, N627, and N637 each carry an N-linked (GlcNAc...) asparagine glycan.

It belongs to the peptidase S8 family. The C-terminal propeptide is autocleaved.

It is found in the secreted. The sequence is that of Subtilisin-like protease SBT4.9 from Arabidopsis thaliana (Mouse-ear cress).